A 426-amino-acid polypeptide reads, in one-letter code: MSNSHTLFEAAQAHIPGGVNSPVRAFKGVGGDPVFFESAKGAYLTDADGKQYIDYVASWGPAILGHTHPDVIKAVQTQAEKGLSFGAPTEIETTMADMVCDLIPSMDMVRMVSSGTEATMTAIRLARGYTGRDKIVKFEGCYHGHSDSLLVKAGSGALTLGVPSSPGVPACLAQETLTLTHNDSEEVKKVFSEIGDQIACIIVEPVAGNMNCIPPEDGFLETLREVCDESGAVLIFDEVMCGFRVGLTGAQGRYNITPDLTTFGKVIGGGMPVGAFGGKKEVMQHIAPLGPVYQAGTLSGNPIAMTAGLKTLELISKPGFFEELEAKTTKLVNGLQKAADEAGIAFTTNQVGAMFGFFFSEEKDIRRFSQVAKGNMEQFKAFYHGMLDEGIYLAPSAFEAGFVSSAHTDQDIDDTIAAAKKVMATL.

N6-(pyridoxal phosphate)lysine is present on K265.

The protein belongs to the class-III pyridoxal-phosphate-dependent aminotransferase family. HemL subfamily. Homodimer. Pyridoxal 5'-phosphate serves as cofactor.

It localises to the cytoplasm. It carries out the reaction (S)-4-amino-5-oxopentanoate = 5-aminolevulinate. It functions in the pathway porphyrin-containing compound metabolism; protoporphyrin-IX biosynthesis; 5-aminolevulinate from L-glutamyl-tRNA(Glu): step 2/2. This chain is Glutamate-1-semialdehyde 2,1-aminomutase, found in Hydrogenovibrio crunogenus (strain DSM 25203 / XCL-2) (Thiomicrospira crunogena).